Reading from the N-terminus, the 101-residue chain is Enhancer of yellow 2 transcription factor (101 aa).

It belongs to the ENY2 family. Component of the nuclear pore complex (NPC)-associated AMEX complex (anchoring and mRNA export complex), composed of at least e(y)2 and xmas-2. Component of the SAGA transcription coactivator-HAT complexes, at least composed of Ada2b, e(y)2, Pcaf/Gcn5, Taf10 and Nipped-A/Trrap. Within the SAGA complex, e(y)2, Sgf11, and not/nonstop form an additional subcomplex of SAGA called the DUB module (deubiquitination module). Component of the THO complex, composed of at least e(y)2, HPR1, THO2, THOC5, THOC6 and THOC7. Interacts with e(y)1. Interacts with su(Hw) (via zinc fingers). Interacts with xmas-2; required for localization to the nuclear periphery. Interacts with the nuclear pore complex (NPC).

The protein localises to the nucleus. Its subcellular location is the nucleoplasm. It is found in the cytoplasm. Functionally, involved in mRNA export coupled transcription activation by association with both the AMEX and the SAGA complexes. The SAGA complex is a multiprotein complex that activates transcription by remodeling chromatin and mediating histone acetylation and deubiquitination. Within the SAGA complex, participates in a subcomplex that specifically deubiquitinates histone H2B. The SAGA complex is recruited to specific gene promoters by activators, where it is required for transcription. Required for nuclear receptor-mediated transactivation. Involved in transcription elongation by recruiting the THO complex onto nascent mRNA. The AMEX complex functions in docking export-competent ribonucleoprotein particles (mRNPs) to the nuclear entrance of the nuclear pore complex (nuclear basket). AMEX participates in mRNA export and accurate chromatin positioning in the nucleus by tethering genes to the nuclear periphery. In Drosophila yakuba (Fruit fly), this protein is Enhancer of yellow 2 transcription factor.